The following is a 137-amino-acid chain: Putative transcriptional regulatory protein MJ0173 (137 aa).

The protein belongs to the Tfx family.

In terms of biological role, putative transcriptional regulator. The polypeptide is Putative transcriptional regulatory protein MJ0173 (Methanocaldococcus jannaschii (strain ATCC 43067 / DSM 2661 / JAL-1 / JCM 10045 / NBRC 100440) (Methanococcus jannaschii)).